The primary structure comprises 86 residues: Large ribosomal subunit protein uL23 (86 aa).

The protein belongs to the universal ribosomal protein uL23 family. In terms of assembly, part of the 50S ribosomal subunit. Contacts protein L29.

Functionally, binds to 23S rRNA. One of the proteins that surrounds the polypeptide exit tunnel on the outside of the ribosome. The protein is Large ribosomal subunit protein uL23 of Methanococcus aeolicus (strain ATCC BAA-1280 / DSM 17508 / OCM 812 / Nankai-3).